A 579-amino-acid polypeptide reads, in one-letter code: XK-related protein 7 (579 aa).

Residues 1-18 (MAAKSDGAAASASPDPEG) are compositionally biased toward low complexity. The tract at residues 1 to 40 (MAAKSDGAAASASPDPEGAAGGARGSAGGRGEAAAAAGPP) is disordered. Gly residues predominate over residues 19 to 31 (AAGGARGSAGGRG). The next 2 helical transmembrane spans lie at 59–79 (WVLC…WLAA) and 89–109 (YFSL…LLSF). The interval 146 to 165 (GAFRTKEGSPEPGPQPAPSS) is disordered. 5 consecutive transmembrane segments (helical) span residues 260–280 (LLPA…LASY), 314–334 (GLAF…FIVA), 355–375 (WEEI…WFNV), 384–404 (MTLY…FWYS), and 415–435 (LIMV…MCVY). The interval 466–510 (ADAITSPPRSLPRTTGAERDGASAGERAGTPTPPVFQVRPGLPPT) is disordered.

The protein belongs to the XK family.

It localises to the cell membrane. The sequence is that of XK-related protein 7 from Homo sapiens (Human).